A 190-amino-acid polypeptide reads, in one-letter code: Transcription termination/antitermination protein NusG (190 aa).

In terms of domain architecture, KOW spans 141–165; the sequence is GDMVRVTSGPFADFSGVVSEVNAPQ.

It belongs to the NusG family.

Functionally, participates in transcription elongation, termination and antitermination. In Deinococcus radiodurans (strain ATCC 13939 / DSM 20539 / JCM 16871 / CCUG 27074 / LMG 4051 / NBRC 15346 / NCIMB 9279 / VKM B-1422 / R1), this protein is Transcription termination/antitermination protein NusG.